Reading from the N-terminus, the 937-residue chain is Isoleucine--tRNA ligase (937 aa).

The 'HIGH' region signature appears at 58–68; the sequence is PYANGTLHLGH. L-isoleucyl-5'-AMP is bound at residue Glu-561. The short motif at 602–606 is the 'KMSKS' region element; it reads KMSKS. Residue Lys-605 participates in ATP binding. Cys-900, Cys-903, Cys-920, and Cys-923 together coordinate Zn(2+).

The protein belongs to the class-I aminoacyl-tRNA synthetase family. IleS type 1 subfamily. Monomer. Zn(2+) is required as a cofactor.

Its subcellular location is the cytoplasm. It carries out the reaction tRNA(Ile) + L-isoleucine + ATP = L-isoleucyl-tRNA(Ile) + AMP + diphosphate. In terms of biological role, catalyzes the attachment of isoleucine to tRNA(Ile). As IleRS can inadvertently accommodate and process structurally similar amino acids such as valine, to avoid such errors it has two additional distinct tRNA(Ile)-dependent editing activities. One activity is designated as 'pretransfer' editing and involves the hydrolysis of activated Val-AMP. The other activity is designated 'posttransfer' editing and involves deacylation of mischarged Val-tRNA(Ile). This chain is Isoleucine--tRNA ligase, found in Histophilus somni (strain 2336) (Haemophilus somnus).